A 260-amino-acid polypeptide reads, in one-letter code: Small ribosomal subunit protein uS2 (260 aa).

Positions G224–A260 are disordered. Residues A243–A260 are compositionally biased toward acidic residues.

Belongs to the universal ribosomal protein uS2 family.

The polypeptide is Small ribosomal subunit protein uS2 (Oenococcus oeni (strain ATCC BAA-331 / PSU-1)).